Here is an 81-residue protein sequence, read N- to C-terminus: Small cysteine-rich protein 1 1 (81 aa).

The signal sequence occupies residues 1 to 19 (MGVHFNICLLLLLVATISS). Positions 20-39 (QTLKATEKDDSTDENPFGIY) are excised as a propeptide.

The protein belongs to the Cnidaria small cysteine-rich protein (SCRiP) family. alpha subfamily. In terms of processing, the basic myotoxic domain of rattlesnake crotamine toxins (with 6 Cys residues) has been detected in this protein. However, this protein contains 2 additional Cys at the C-terminal region. Hence, this protein may contain 4 disulfide bonds instead of the 3 suggested by the myotoxin domain.

It is found in the secreted. It localises to the nematocyst. Functionally, induces neurotoxic symptoms on zebrafish. Has also been claimed to be implied in calcification, but tests on homolog proteins suggest that proteins of this family have a neurotoxic function and not a calcification function. This Montipora capitata (Rice coral) protein is Small cysteine-rich protein 1 1.